Here is a 426-residue protein sequence, read N- to C-terminus: UDP-N-acetylglucosamine 1-carboxyvinyltransferase (426 aa).

22–23 contributes to the phosphoenolpyruvate binding site; the sequence is KN. Arg-94 contacts UDP-N-acetyl-alpha-D-glucosamine. Cys-118 acts as the Proton donor in catalysis. Cys-118 carries the 2-(S-cysteinyl)pyruvic acid O-phosphothioketal modification. UDP-N-acetyl-alpha-D-glucosamine-binding positions include 123-127, Asp-310, and Ile-332; that span reads RPVDL.

This sequence belongs to the EPSP synthase family. MurA subfamily.

The protein resides in the cytoplasm. It carries out the reaction phosphoenolpyruvate + UDP-N-acetyl-alpha-D-glucosamine = UDP-N-acetyl-3-O-(1-carboxyvinyl)-alpha-D-glucosamine + phosphate. It participates in cell wall biogenesis; peptidoglycan biosynthesis. In terms of biological role, cell wall formation. Adds enolpyruvyl to UDP-N-acetylglucosamine. In Hyphomonas neptunium (strain ATCC 15444), this protein is UDP-N-acetylglucosamine 1-carboxyvinyltransferase.